The chain runs to 425 residues: Protein let-756 (425 aa).

2 disordered regions span residues Leu277 to Glu298 and Glu314 to Pro425. Residues Lys281–Arg291 are compositionally biased toward basic residues. Residues Ala329 to Asn340 show a composition bias toward polar residues. The span at His378–Arg389 shows a compositional bias: basic residues. Over residues Asp395 to Pro425 the composition is skewed to polar residues.

Belongs to the heparin-binding growth factors family. In terms of assembly, interacts with pal-1. Expressed in pharynx, CAN neuron and body wall muscles.

It localises to the nucleus. Its subcellular location is the membrane. Functionally, required for larval development. Probably by binding receptor egl-15, negatively regulates membrane protrusion from body wall muscles during larval development. In Caenorhabditis elegans, this protein is Protein let-756 (let-756).